We begin with the raw amino-acid sequence, 122 residues long: Ribonuclease P protein component (122 aa).

The protein belongs to the RnpA family. As to quaternary structure, consists of a catalytic RNA component (M1 or rnpB) and a protein subunit.

The enzyme catalyses Endonucleolytic cleavage of RNA, removing 5'-extranucleotides from tRNA precursor.. Functionally, RNaseP catalyzes the removal of the 5'-leader sequence from pre-tRNA to produce the mature 5'-terminus. It can also cleave other RNA substrates such as 4.5S RNA. The protein component plays an auxiliary but essential role in vivo by binding to the 5'-leader sequence and broadening the substrate specificity of the ribozyme. This chain is Ribonuclease P protein component, found in Lactobacillus johnsonii (strain CNCM I-12250 / La1 / NCC 533).